The primary structure comprises 115 residues: UPF0102 protein NMCC_2054 (115 aa).

This sequence belongs to the UPF0102 family.

This is UPF0102 protein NMCC_2054 from Neisseria meningitidis serogroup C (strain 053442).